We begin with the raw amino-acid sequence, 648 residues long: Golgin subfamily A member 8G (648 aa).

Positions 1-11 (MWPQARLPPHP) are enriched in pro residues. Disordered stretches follow at residues 1–84 (MWPQ…SATL) and 119–139 (NKQVEHQLEEEKKANNEKQKA). The segment covering 50–62 (TNGSIHETATSGG) has biased composition (polar residues). Coiled-coil stretches lie at residues 105 to 160 (VSQL…LNTD), 223 to 275 (LEQS…MSQE), and 318 to 424 (EVEL…QQKQ). The segment covering 121 to 139 (QVEHQLEEEKKANNEKQKA) has biased composition (basic and acidic residues). Disordered stretches follow at residues 356–376 (LREQEERLQEQQERLPEQEER), 434–461 (ALPGEGDGGGHLDSEGEEAPRPIPSIPQ), 508–549 (PITK…GVAA), and 600–624 (PVQGEAREGSPHDNPTAQPIVQDHQ). Over residues 441 to 453 (GGGHLDSEGEEAP) the composition is skewed to basic and acidic residues. A compositionally biased stretch (gly residues) spans 521–534 (PGGGHHQAGPGQGG).

It belongs to the GOLGA8 family.

The chain is Golgin subfamily A member 8G from Homo sapiens (Human).